A 149-amino-acid polypeptide reads, in one-letter code: C-type lectin domain family 2 member B (149 aa).

At Met-1–Lys-7 the chain is on the cytoplasmic side. The helical; Signal-anchor for type II membrane protein transmembrane segment at Cys-8 to Val-25 threads the bilayer. The Extracellular portion of the chain corresponds to Lys-26–His-149. Residues Cys-35 and Cys-46 are joined by a disulfide bond. The C-type lectin domain maps to Phe-42–Arg-145. N-linked (GlcNAc...) asparagine glycans are attached at residues Asn-57, Asn-62, and Asn-100. 2 disulfide bridges follow: Cys-63/Cys-144 and Cys-123/Cys-136.

Homodimer. Interacts with NKp80/KLRF1. Post-translationally, (Microbial infection) Ubiquitinated by human herpesvirus 8 protein K5, leading to endolysosomal degradation. N-linked glycosylated; required to enable surface expression and the extent of surface expression correlates with the number of functional conventional N-glycosylation sites. Expressed preferentially in lymphoid tissues, and in most hematopoietic cell types.

It is found in the cell membrane. It localises to the golgi apparatus membrane. Its function is as follows. Membrane-bound protein expressed on myeloid cells which acts as a ligand to stimulate the activating receptor NKp80/KLRF1, expressed on the surface of natural killer (NK) cells. In turn, stimulates NK-cell cytotoxicity and cytokine production leading to the cytolysis of malignant CLEC2B-expressing myeloid cells. This is C-type lectin domain family 2 member B (CLEC2B) from Homo sapiens (Human).